Consider the following 216-residue polypeptide: Ethylene-inducing xylanase (216 aa).

A signal peptide spans 1-19; sequence MVSFSSLFVAACAAVTAFA. The region spanning 28–216 is the GH11 domain; it reads AITTSQQGTS…SSGSSDITVS (189 aa). The Nucleophile role is filled by glutamate 112. Glutamate 203 acts as the Proton donor in catalysis.

It belongs to the glycosyl hydrolase 11 (cellulase G) family.

The protein resides in the secreted. The catalysed reaction is Endohydrolysis of (1-&gt;4)-beta-D-xylosidic linkages in xylans.. It participates in glycan degradation; xylan degradation. Functionally, endo-1,4-beta-xylanase involved in the hydrolysis of xylan, a major structural heterogeneous polysaccharide found in plant biomass representing the second most abundant polysaccharide in the biosphere, after cellulose. Acts as a pathogen-associated molecular pattern (PAMP) that can trigger plant cell death. Triggers a series of immune responses in citrus fruit and enhanced the resistance of citrus and other fruit against fungal pathogens. In Penicillium digitatum (strain Pd1 / CECT 20795) (Green mold), this protein is Ethylene-inducing xylanase.